We begin with the raw amino-acid sequence, 815 residues long: SNF1 protein kinase subunit beta-1 (815 aa).

Positions 1–11 are enriched in polar residues; sequence MGNSPSTQDPS. 2 disordered regions span residues 1 to 88 and 120 to 146; these read MGNS…TIDK and HDVG…TVKR. The N-myristoyl glycine moiety is linked to residue G2. The segment covering 12–31 has biased composition (basic and acidic residues); that stretch reads HSTKKEHGHHFHDAFNKDRQ. The span at 32-42 shows a compositional bias: polar residues; sequence GSITSQLFNNR. At S33 the chain carries Phosphoserine. 2 stretches are compositionally biased toward basic and acidic residues: residues 72–88 and 120–129; these read PSTD…TIDK and HDVGAPEEQV. 6 positions are modified to phosphoserine: S181, S198, S200, S206, S209, and S220. Disordered regions lie at residues 311–335, 363–389, and 410–444; these read HANN…NDDF, HHNK…FASL, and PLHP…SSIS. Residues 313-326 show a composition bias toward low complexity; sequence NNNGNIENNTRNKG. S331 carries the phosphoserine modification. The span at 363-376 shows a compositional bias: basic residues; the sequence is HHNKTKKAQSKKIR. Composition is skewed to low complexity over residues 377 to 389 and 433 to 444; these read SASN…FASL and HSNSMSSMSSIS. Residues 473–716 form a kinase-interacting sequence (KIS); required for interaction with SNF1 region; sequence VSTDIASALK…LQQGGNIDAE (244 aa). Residues S494 and S497 each carry the phosphoserine modification. A disordered region spans residues 581–616; sequence EPTLDEELPKRPELKRFPSSSRKSSYYSAKGVERPS. A compositionally biased stretch (basic and acidic residues) spans 587–596; it reads ELPKRPELKR. Positions 599–608 are enriched in low complexity; it reads SSSRKSSYYS. Residue S643 is modified to Phosphoserine. The tract at residues 724 to 804 is association with SNF1 kinase complex (ASC) domain; required for interaction with SNF4; the sequence is SRYPVPDLPI…FITQVVYAPC (81 aa).

The protein belongs to the 5'-AMP-activated protein kinase beta subunit family. In terms of assembly, component of the SNF1 kinase complex, a heterotrimeric complex composed of the catalytic alpha subunit SNF1, one of the three related beta subunits SIP1, SIP2 or GAL83, and the regulatory gamma subunit SNF4. The beta subunit serves as a bridge between the catalytic and the regulatory subunit. Interacts (via KIS domain) with SNF1. Interacts (via ASC domain) with SNF4. Phosphorylated by SNF1 in vitro.

The protein resides in the cytoplasm. It localises to the vacuole membrane. Its function is as follows. Beta subunit of the SNF1 kinase complex, which is required for transcriptional, metabolic, and developmental adaptations in response to glucose limitation. Has a structural role, mediating heterotrimer formation, and a regulatory role, defining carbon source-regulated subcellular location and substrate specificity of the SNF1 kinase complex. Promotes the PKA-regulated relocalization of the SNF1 kinase complex to the vacuolar membrane in response to various types of carbon stress. The polypeptide is SNF1 protein kinase subunit beta-1 (SIP1) (Saccharomyces cerevisiae (strain RM11-1a) (Baker's yeast)).